The following is a 490-amino-acid chain: MTGDADEGRDVVRRDRFSGGPARGFLSSLAADERIFEADLAVDRAHVVMLDEQDIIGTDDAAAILGALDDVEAAGHGSLTDGEDVHAAIETAVIERVGDRGGKMHTARSRNDEVAACIRYRLREDVLAAVEATLEAREMLLDVAGDHTETVMPGFTHLQPAQPTTVAHYLHSYASALARDTERLLDAYGRINRSPLGAAAFAGTPFDIDRERTAELLGFDGVVRNSMDAASARDFLVETTAAAAGLATTLSGLAEDLVVFSKAGYVELDDAYASTSSIMPQKKNPDTMELVRATAGDTAAGLNALLTILKGLPRAYNRDLQRAHPHAFEALDAVTEATEVAAGAVATADWKEPALSEAAGEGFSTATGVADLLAMEGVPFRTAHELVARAAEAGGDYAALSAAAEDILGGPLSEHVDKAAVEAALDPESSVASRDSLGGPAPESMAAALSAAGQRLDADAEALRERRGALATAADERERVVSSYDSTAPE.

2 disordered regions span residues 426-452 (DPES…LSAA) and 469-490 (ALAT…TAPE). The span at 440–452 (PAPESMAAALSAA) shows a compositional bias: low complexity. A compositionally biased stretch (basic and acidic residues) spans 469–480 (ALATAADERERV).

The protein belongs to the lyase 1 family. Argininosuccinate lyase subfamily.

The protein resides in the cytoplasm. It catalyses the reaction 2-(N(omega)-L-arginino)succinate = fumarate + L-arginine. The protein operates within amino-acid biosynthesis; L-arginine biosynthesis; L-arginine from L-ornithine and carbamoyl phosphate: step 3/3. This chain is Argininosuccinate lyase, found in Natronomonas pharaonis (strain ATCC 35678 / DSM 2160 / CIP 103997 / JCM 8858 / NBRC 14720 / NCIMB 2260 / Gabara) (Halobacterium pharaonis).